Here is a 214-residue protein sequence, read N- to C-terminus: Probable transaldolase (214 aa).

Lys83 serves as the catalytic Schiff-base intermediate with substrate.

It belongs to the transaldolase family. Type 3B subfamily.

The protein localises to the cytoplasm. The enzyme catalyses D-sedoheptulose 7-phosphate + D-glyceraldehyde 3-phosphate = D-erythrose 4-phosphate + beta-D-fructose 6-phosphate. The protein operates within carbohydrate degradation; pentose phosphate pathway; D-glyceraldehyde 3-phosphate and beta-D-fructose 6-phosphate from D-ribose 5-phosphate and D-xylulose 5-phosphate (non-oxidative stage): step 2/3. In terms of biological role, transaldolase is important for the balance of metabolites in the pentose-phosphate pathway. In Geobacter metallireducens (strain ATCC 53774 / DSM 7210 / GS-15), this protein is Probable transaldolase.